The primary structure comprises 856 residues: Glucans biosynthesis glucosyltransferase H (856 aa).

6 helical membrane passes run 144–164 (ILLVLMLGQTIVAGWYMKGIM), 198–218 (ILILFGILFCWVSAGFWTALM), 517–537 (VFLTGVMSYLSAPLWFFFLVL), 574–594 (LFSTTIVLLFLPKLLSIILIW), 608–628 (TLSMLLEMLFSMLLAPVRMIF), and 684–704 (FLWWLVPIVGSLMLSIPVSVI).

This sequence belongs to the glycosyltransferase 2 family. OpgH subfamily.

It is found in the cell inner membrane. It functions in the pathway glycan metabolism; osmoregulated periplasmic glucan (OPG) biosynthesis. Involved in the biosynthesis of osmoregulated periplasmic glucans (OPGs). The sequence is that of Glucans biosynthesis glucosyltransferase H from Pseudomonas fluorescens (strain ATCC BAA-477 / NRRL B-23932 / Pf-5).